Reading from the N-terminus, the 628-residue chain is Venom redulysin 1 (628 aa).

A signal peptide spans 1–19 (MSKLWLLLLLVAAFQAVHS). Positions 20–368 (YPAAESDYLE…EDDVAESDEE (349 aa)) are excised as a propeptide. Residues 290-313 (DYEEEEEEEEEEEFELEEDYEEDP) form a disordered region. Positions 291–313 (YEEEEEEEEEEEFELEEDYEEDP) are enriched in acidic residues.

The protein belongs to the redulysin-like family. In terms of processing, contains 5 disulfide bonds. Expressed by the venom gland (posterior main gland) (at protein level).

It localises to the secreted. In terms of biological role, highly abundant protein that may be responsible for the observed disruption of sensory neuron membranes, since it is homologous to proteins such as trialysin, which forms pores in lipid bilayers. Probable insecticidal toxin. In Platymeris rhadamanthus (Red spot assassin bug), this protein is Venom redulysin 1.